We begin with the raw amino-acid sequence, 354 residues long: 5,10-methenyltetrahydromethanopterin hydrogenase (354 aa).

Belongs to the HMD family.

It carries out the reaction 5,10-methenyl-5,6,7,8-tetrahydromethanopterin + H2 = 5,10-methylenetetrahydromethanopterin + H(+). It participates in one-carbon metabolism; methanogenesis from CO(2); 5,10-methylene-5,6,7,8-tetrahydromethanopterin from 5,10-methenyl-5,6,7,8-tetrahydromethanopterin (hydrogen route): step 1/1. Its function is as follows. Catalyzes the reversible reduction of methenyl-H(4)MPT(+) to methylene-H(4)MPT. The sequence is that of 5,10-methenyltetrahydromethanopterin hydrogenase from Methanococcus maripaludis (strain C5 / ATCC BAA-1333).